The following is a 245-amino-acid chain: tRNA pseudouridine synthase A (245 aa).

Residue Asp-52 is the Nucleophile of the active site. Residue Tyr-111 coordinates substrate.

The protein belongs to the tRNA pseudouridine synthase TruA family. As to quaternary structure, homodimer.

The catalysed reaction is uridine(38/39/40) in tRNA = pseudouridine(38/39/40) in tRNA. Functionally, formation of pseudouridine at positions 38, 39 and 40 in the anticodon stem and loop of transfer RNAs. The protein is tRNA pseudouridine synthase A of Rhodopseudomonas palustris (strain BisB18).